We begin with the raw amino-acid sequence, 434 residues long: MPNRRASRNAYYFFVQEKIPELRRRGLPVARVADAIPYCSADWALLREDEKEKYSEMAREWRAAQGKDSGPSEKQKLVSTPLRRPGMLVPKPSISPPDMSNLSIKSDQALLGGIFYFLNIFSHGELPPHCEQRFLPCEIGCVKYSLQEGIMADFHSFIHPGEIPRGFRFHCQAASDSSHKIPISNFEFGHDQATVLQNLYKFIHPNPGNWPPIYCKSDDRARVNWCLKRMERASEIRQDLELLTVEDLVVGIYQQKFLKEPSKTWVRSLLDVAMWDYSSNTRCKWHEENDILFCALAVCKKIAYCISNSLATLFGIQLTGAHVPLQDYEASNSVTPKMVVLDAGRYQKLRVESPGFCHFNSYNQEQRSNTSTGYYPSGVKISGPHSSVRGRGITRLLESISNSSNNIHRFSSCETSLSPYTPQKDGYKPFSSFS.

A DNA-binding region (HMG box) is located at residues 4 to 73; it reads RRASRNAYYF…AQGKDSGPSE (70 aa).

The protein belongs to the maelstrom family. In terms of assembly, interacts with SMARCB1, SIN3B and DDX4. Interacts with piRNA-associated proteins TDRD1, PIWIL1 and PIWIL2. Interacts with Tex19.1 and, probably, Tex19.2. As to expression, testis-specific. Present in spermatocytes and round and early elongating spermatids.

The protein resides in the cytoplasm. The protein localises to the nucleus. In terms of biological role, plays a central role during spermatogenesis by repressing transposable elements and preventing their mobilization, which is essential for the germline integrity. Acts via the piRNA metabolic process, which mediates the repression of transposable elements during meiosis by forming complexes composed of piRNAs and Piwi proteins and governs the methylation and subsequent repression of transposons. Its association with piP-bodies suggests a participation in the secondary piRNAs metabolic process. Required for the localization of germ-cell factors to the meiotic nuage. This Mus musculus (Mouse) protein is Protein maelstrom homolog.